The sequence spans 595 residues: ATPase family AAA domain-containing protein 3 (595 aa).

A disordered region spans residues 1-48; that stretch reads MSWLFGVQKNATPQIPDDFQAGAAPGGPQQPGQGQRQEGNSKMAYSFD. Residues 1-243 are Mitochondrial intermembrane-facing; that stretch reads MSWLFGVQKN…LNQFLNDKTK (243 aa). Residues 20 to 35 show a composition bias toward low complexity; it reads QAGAAPGGPQQPGQGQ. 2 coiled-coil regions span residues 80–107 and 140–175; these read VTRQ…HIRV and EELA…EHEL. A helical transmembrane segment spans residues 244 to 260; that stretch reads IAAAVGGLTALAVGWYT. Residues 261 to 595 lie on the Mitochondrial matrix side of the membrane; that stretch reads AKRGTGVTAR…GTTLKRETAV (335 aa). 349-356 contributes to the ATP binding site; that stretch reads GPPGTGKT. The short motif at 592–595 is the PDZ-binding element; that stretch reads ETAV.

This sequence belongs to the AAA ATPase family.

It localises to the mitochondrion inner membrane. Its subcellular location is the mitochondrion matrix. The protein resides in the mitochondrion nucleoid. In terms of biological role, essential for mitochondrial network organization, mitochondrial metabolism and cell growth at organism and cellular level. Important during development for the up-regulation of mitochondrial activity during the transition to higher larval stages. Regulates mitochondrial iron homeostasis. May play an important role in mitochondrial protein synthesis. May also participate in mitochondrial DNA replication. May bind to mitochondrial DNA D-loops and contribute to nucleoid stability. Plays a role in regulating the production of reactive oxygen species in response to heat stress. The sequence is that of ATPase family AAA domain-containing protein 3 from Caenorhabditis elegans.